The following is a 213-amino-acid chain: Small ribosomal subunit protein uS4 (213 aa).

Positions 16–53 (GTDLGLKSGVKPYDVKTKKSARPPGQHGVSRNKSSEYS) are disordered. Positions 44 to 53 (VSRNKSSEYS) are enriched in polar residues. The 67-residue stretch at 97–163 (SRLDNVVYRM…EKSREQLRIK (67 aa)) folds into the S4 RNA-binding domain.

This sequence belongs to the universal ribosomal protein uS4 family. Part of the 30S ribosomal subunit. Contacts protein S5. The interaction surface between S4 and S5 is involved in control of translational fidelity.

In terms of biological role, one of the primary rRNA binding proteins, it binds directly to 16S rRNA where it nucleates assembly of the body of the 30S subunit. Functionally, with S5 and S12 plays an important role in translational accuracy. This chain is Small ribosomal subunit protein uS4, found in Psychrobacter cryohalolentis (strain ATCC BAA-1226 / DSM 17306 / VKM B-2378 / K5).